The primary structure comprises 104 residues: Iron-sulfur cluster assembly protein CyaY (104 aa).

This sequence belongs to the frataxin family.

In terms of biological role, involved in iron-sulfur (Fe-S) cluster assembly. May act as a regulator of Fe-S biogenesis. This is Iron-sulfur cluster assembly protein CyaY from Vibrio cholerae serotype O1 (strain ATCC 39541 / Classical Ogawa 395 / O395).